A 190-amino-acid chain; its full sequence is Imidazoleglycerol-phosphate dehydratase (190 aa).

This sequence belongs to the imidazoleglycerol-phosphate dehydratase family.

The protein resides in the cytoplasm. It carries out the reaction D-erythro-1-(imidazol-4-yl)glycerol 3-phosphate = 3-(imidazol-4-yl)-2-oxopropyl phosphate + H2O. Its pathway is amino-acid biosynthesis; L-histidine biosynthesis; L-histidine from 5-phospho-alpha-D-ribose 1-diphosphate: step 6/9. This is Imidazoleglycerol-phosphate dehydratase from Campylobacter fetus subsp. fetus (strain 82-40).